The sequence spans 464 residues: Peptidase inhibitor 16 (464 aa).

An N-terminal signal peptide occupies residues 1 to 27; the sequence is MHGSGSLLACLLPPLLLLGAAPGPAGA. The region spanning 37 to 165 is the SCP domain; sequence VELHNLYRTQ…TNIHLLVCNY (129 aa). An N-linked (GlcNAc...) asparagine glycan is attached at Asn114. 4 disordered regions span residues 208–241, 260–281, 304–347, and 386–412; these read DLSS…TEPP, VETK…TKTP, PATL…LMGT, and TTLK…ANAV. Residues 311–325 show a composition bias toward basic and acidic residues; it reads STHDPIPKSADKEAS. Residues 395–411 are compositionally biased toward low complexity; it reads SSKSLSNSPSASATANA.

The protein belongs to the CRISP family. In terms of assembly, interacts with PSP94/MSMB. N-glycosylated.

Its subcellular location is the secreted. May inhibit cardiomyocyte growth. The sequence is that of Peptidase inhibitor 16 (PI16) from Bos taurus (Bovine).